An 89-amino-acid polypeptide reads, in one-letter code: Cell division topological specificity factor (89 aa).

It belongs to the MinE family.

Its function is as follows. Prevents the cell division inhibition by proteins MinC and MinD at internal division sites while permitting inhibition at polar sites. This ensures cell division at the proper site by restricting the formation of a division septum at the midpoint of the long axis of the cell. This is Cell division topological specificity factor from Legionella pneumophila (strain Paris).